The chain runs to 426 residues: Serine--tRNA ligase (426 aa).

230 to 232 (TSE) is an L-serine binding site. An ATP-binding site is contributed by 261-263 (RSE). Glu284 provides a ligand contact to L-serine. 348 to 351 (EISS) provides a ligand contact to ATP. An L-serine-binding site is contributed by Ser384.

Belongs to the class-II aminoacyl-tRNA synthetase family. Type-1 seryl-tRNA synthetase subfamily. As to quaternary structure, homodimer. The tRNA molecule binds across the dimer.

It localises to the cytoplasm. The enzyme catalyses tRNA(Ser) + L-serine + ATP = L-seryl-tRNA(Ser) + AMP + diphosphate + H(+). It carries out the reaction tRNA(Sec) + L-serine + ATP = L-seryl-tRNA(Sec) + AMP + diphosphate + H(+). It participates in aminoacyl-tRNA biosynthesis; selenocysteinyl-tRNA(Sec) biosynthesis; L-seryl-tRNA(Sec) from L-serine and tRNA(Sec): step 1/1. Catalyzes the attachment of serine to tRNA(Ser). Is also able to aminoacylate tRNA(Sec) with serine, to form the misacylated tRNA L-seryl-tRNA(Sec), which will be further converted into selenocysteinyl-tRNA(Sec). In Sphingopyxis alaskensis (strain DSM 13593 / LMG 18877 / RB2256) (Sphingomonas alaskensis), this protein is Serine--tRNA ligase.